The chain runs to 330 residues: Lipoyl synthase (330 aa).

The [4Fe-4S] cluster site is built by C77, C82, C88, C103, C107, C110, and S317. The 218-residue stretch at 89–306 (FNHGTATFMI…RSEAEKMGFE (218 aa)) folds into the Radical SAM core domain.

It belongs to the radical SAM superfamily. Lipoyl synthase family. [4Fe-4S] cluster is required as a cofactor.

It localises to the cytoplasm. The catalysed reaction is [[Fe-S] cluster scaffold protein carrying a second [4Fe-4S](2+) cluster] + N(6)-octanoyl-L-lysyl-[protein] + 2 oxidized [2Fe-2S]-[ferredoxin] + 2 S-adenosyl-L-methionine + 4 H(+) = [[Fe-S] cluster scaffold protein] + N(6)-[(R)-dihydrolipoyl]-L-lysyl-[protein] + 4 Fe(3+) + 2 hydrogen sulfide + 2 5'-deoxyadenosine + 2 L-methionine + 2 reduced [2Fe-2S]-[ferredoxin]. The protein operates within protein modification; protein lipoylation via endogenous pathway; protein N(6)-(lipoyl)lysine from octanoyl-[acyl-carrier-protein]: step 2/2. Functionally, catalyzes the radical-mediated insertion of two sulfur atoms into the C-6 and C-8 positions of the octanoyl moiety bound to the lipoyl domains of lipoate-dependent enzymes, thereby converting the octanoylated domains into lipoylated derivatives. This is Lipoyl synthase from Haemophilus ducreyi (strain 35000HP / ATCC 700724).